Consider the following 269-residue polypeptide: Iron(3+)-hydroxamate import ATP-binding protein FhuC (269 aa).

The 237-residue stretch at 4–240 folds into the ABC transporter domain; the sequence is LSTEQLGIGY…DILKQVFQID (237 aa). ATP contacts are provided by residues 36–43 and 160–171; these read GPNGCGKS and LLLLDEPTTYLD.

The protein belongs to the ABC transporter superfamily. Iron (Fe3+)-hydroxamate importer (TC 3.A.1.14.7) family. In terms of assembly, the complex is composed of an ATP-binding protein (FhuC), two transmembrane proteins (FhuB and FhuG) and a solute-binding protein (FhuD or YxeB).

Its subcellular location is the cell membrane. It carries out the reaction ATP + H2O + Fe(3+)-hydroxamate complex-[hydroxamate-binding protein]Side 1 = ADP + phosphate + Fe(3+)-hydroxamate complexSide 2 + [hydroxamate-binding protein]Side 1.. Part of the ABC transporter complex FhuBGCD involved in iron(3+)-hydroxamate import. Responsible for energy coupling to the transport system. The polypeptide is Iron(3+)-hydroxamate import ATP-binding protein FhuC (fhuC) (Bacillus subtilis (strain 168)).